The sequence spans 589 residues: Bifunctional protein TrpGD (589 aa).

A Glutamine amidotransferase type-1 domain is found at 46–241 (RVIVIDNYDS…LNIQDIQVKK (196 aa)). 99–101 (GPG) provides a ligand contact to L-glutamine. C126 functions as the Nucleophile; for GATase activity in the catalytic mechanism. L-glutamine is bound by residues Q130 and 176 to 177 (SL). Catalysis depends on for GATase activity residues H215 and E217. The interval 253 to 589 (ALKKLVEFED…MDYQKTLGNS (337 aa)) is anthranilate phosphoribosyltransferase.

In the C-terminal section; belongs to the anthranilate phosphoribosyltransferase family. As to quaternary structure, heterotetramer consisting of two non-identical subunits: a beta subunit (TrpG) and a large alpha subunit (TrpE).

The enzyme catalyses chorismate + L-glutamine = anthranilate + pyruvate + L-glutamate + H(+). It carries out the reaction N-(5-phospho-beta-D-ribosyl)anthranilate + diphosphate = 5-phospho-alpha-D-ribose 1-diphosphate + anthranilate. It participates in amino-acid biosynthesis; L-tryptophan biosynthesis; L-tryptophan from chorismate: step 1/5. Its pathway is amino-acid biosynthesis; L-tryptophan biosynthesis; L-tryptophan from chorismate: step 2/5. Part of a heterotetrameric complex that catalyzes the two-step biosynthesis of anthranilate, an intermediate in the biosynthesis of L-tryptophan. In the first step, the glutamine-binding beta subunit (TrpG) of anthranilate synthase (AS) provides the glutamine amidotransferase activity which generates ammonia as a substrate that, along with chorismate, is used in the second step, catalyzed by the large alpha subunit of AS (TrpE) to produce anthranilate. In the absence of TrpG, TrpE can synthesize anthranilate directly from chorismate and high concentrations of ammonia. In addition to synthesizing anthranilate, it also catalyzes the second step of the pathway, the transfer of the phosphoribosyl group of 5-phosphorylribose-1-pyrophosphate (PRPP) to anthranilate. This chain is Bifunctional protein TrpGD (trpGD), found in Thermotoga maritima (strain ATCC 43589 / DSM 3109 / JCM 10099 / NBRC 100826 / MSB8).